Reading from the N-terminus, the 239-residue chain is Skn-1 dependent zygotic transcript 1 protein (239 aa).

May have a role in mesendoderm development during embryogenesis. The polypeptide is Skn-1 dependent zygotic transcript 1 protein (Caenorhabditis briggsae).